Consider the following 560-residue polypeptide: Glutamate--tRNA ligase (560 aa).

The 'HIGH' region motif lies at 108-118 (PNPSGPLHLGH).

The protein belongs to the class-I aminoacyl-tRNA synthetase family. Glutamate--tRNA ligase type 2 subfamily.

The protein localises to the cytoplasm. It carries out the reaction tRNA(Glu) + L-glutamate + ATP = L-glutamyl-tRNA(Glu) + AMP + diphosphate. Functionally, catalyzes the attachment of glutamate to tRNA(Glu) in a two-step reaction: glutamate is first activated by ATP to form Glu-AMP and then transferred to the acceptor end of tRNA(Glu). In Methanocorpusculum labreanum (strain ATCC 43576 / DSM 4855 / Z), this protein is Glutamate--tRNA ligase.